We begin with the raw amino-acid sequence, 798 residues long: ATP-dependent RNA helicase bel (798 aa).

The disordered stretch occupies residues 16-248 (VAGLDLNGGS…SRWKEGGGSN (233 aa)). Residues 31–42 (PITSKTSTNSVT) are compositionally biased toward polar residues. Composition is skewed to gly residues over residues 94-110 (RGGG…GGRG), 118-132 (YGYG…GGGG), and 154-178 (SGGG…GGSG). Phosphoserine occurs at positions 177 and 179. The span at 198 to 209 (RNDRWQEPERPA) shows a compositional bias: basic and acidic residues. Residues Ser-214 and Ser-219 each carry the phosphoserine modification. The Q motif signature appears at 295 to 323 (TSFDDVQLTEIIRNNVALARYDKPTPVQK). Residues 315–322 (YDKPTPVQ) and 339–346 (AQTGSGKT) each bind ATP. Residues 326-515 (IPIIINGRDL…SDFLSNYIFL (190 aa)) enclose the Helicase ATP-binding domain. Residues 459 to 462 (DEAD) carry the DEAD box motif. The region spanning 542 to 693 (YLLDLLSSIR…EIPSFMEDMS (152 aa)) is the Helicase C-terminal domain. Ser-638 carries the phosphoserine modification. Disordered stretches follow at residues 689 to 765 (MEDM…SGGG) and 778 to 798 (GGSY…WWAQ). 2 stretches are compositionally biased toward gly residues: residues 706–717 (RGGGGRYGGGFG) and 740–750 (GGSGSGGGGGS).

The protein belongs to the DEAD box helicase family. DDX3/DED1 subfamily. Vas and bel colocalize in nuage (perinuclear, electron-dense granules in germline cells) and at the oocyte posterior during oogenesis.

The protein localises to the cytoplasm. It carries out the reaction ATP + H2O = ADP + phosphate + H(+). Its function is as follows. ATP-dependent RNA helicase that is essential and required for cellular function, larval growth, and for male and female fertility. Also required for RNA interference (RNAi), double-stranded RNA induces potent and specific gene silencing, by acting downstream of dsRNA internalization. RNAi is mediated by the RNA-induced silencing complex (RISC), a sequence-specific, multicomponent nuclease that destroys or silences messenger RNAs homologous to the silencing trigger. This Drosophila melanogaster (Fruit fly) protein is ATP-dependent RNA helicase bel.